Here is a 181-residue protein sequence, read N- to C-terminus: ATP synthase subunit b (181 aa).

Residues 24–44 (LFPNLPNFIAHLLATIVLVIV) traverse the membrane as a helical segment.

This sequence belongs to the ATPase B chain family. As to quaternary structure, F-type ATPases have 2 components, F(1) - the catalytic core - and F(0) - the membrane proton channel. F(1) has five subunits: alpha(3), beta(3), gamma(1), delta(1), epsilon(1). F(0) has three main subunits: a(1), b(2) and c(10-14). The alpha and beta chains form an alternating ring which encloses part of the gamma chain. F(1) is attached to F(0) by a central stalk formed by the gamma and epsilon chains, while a peripheral stalk is formed by the delta and b chains.

It localises to the cell membrane. In terms of biological role, f(1)F(0) ATP synthase produces ATP from ADP in the presence of a proton or sodium gradient. F-type ATPases consist of two structural domains, F(1) containing the extramembraneous catalytic core and F(0) containing the membrane proton channel, linked together by a central stalk and a peripheral stalk. During catalysis, ATP synthesis in the catalytic domain of F(1) is coupled via a rotary mechanism of the central stalk subunits to proton translocation. Component of the F(0) channel, it forms part of the peripheral stalk, linking F(1) to F(0). The chain is ATP synthase subunit b from Mycoplasma capricolum subsp. capricolum (strain California kid / ATCC 27343 / NCTC 10154).